Reading from the N-terminus, the 271-residue chain is Putative phosphoenolpyruvate synthase regulatory protein (271 aa).

152–159 is a binding site for ADP; that stretch reads GVSRSGKT.

This sequence belongs to the pyruvate, phosphate/water dikinase regulatory protein family. PSRP subfamily.

It catalyses the reaction [pyruvate, water dikinase] + ADP = [pyruvate, water dikinase]-phosphate + AMP + H(+). The catalysed reaction is [pyruvate, water dikinase]-phosphate + phosphate + H(+) = [pyruvate, water dikinase] + diphosphate. Functionally, bifunctional serine/threonine kinase and phosphorylase involved in the regulation of the phosphoenolpyruvate synthase (PEPS) by catalyzing its phosphorylation/dephosphorylation. This Thiocapsa roseopersicina protein is Putative phosphoenolpyruvate synthase regulatory protein.